The sequence spans 353 residues: C-X-C chemokine receptor type 4 (353 aa).

The interval 1 to 22 is important for chemokine binding and signaling; that stretch reads MEGIRIFTSDNYTEDDLGSGDY. Residues 1–39 are Extracellular-facing; that stretch reads MEGIRIFTSDNYTEDDLGSGDYDSMKEPCFREENAHFNR. Residue Asn-11 is glycosylated (N-linked (GlcNAc...) asparagine). Tyr-12 bears the Sulfotyrosine mark. Ser-19 is a glycosylation site (O-linked (Xyl...) (chondroitin sulfate) serine). A Sulfotyrosine modification is found at Tyr-22. 2 cysteine pairs are disulfide-bonded: Cys-29-Cys-275 and Cys-110-Cys-187. The chain crosses the membrane as a helical span at residues 40–64; it reads IFLPTVYSIIFLTGIVGNGLVILVM. Over 65 to 78 the chain is Cytoplasmic; sequence GYQKKLRSMTDKYR. Residues 79 to 100 traverse the membrane as a helical segment; that stretch reads LHLSVADLLFVLTLPFWAVDAV. Residues 95–98 are chemokine binding; the sequence is WAVD. Residues 101 to 111 are Extracellular-facing; sequence ANWYFGKFLCK. Residues 112-131 traverse the membrane as a helical segment; the sequence is AVHVIYTVNLYSSVLILAFI. Residues 114–118 are chemokine binding; it reads HVIYT. Residues 132–155 are Cytoplasmic-facing; that stretch reads SLDRYLAIVHATNSQKPRKLLAEK. The short motif at 134–136 is the Important for signaling element; the sequence is DRY. The tract at residues 136 to 148 is involved in dimerization; when bound to chemokine; that stretch reads YLAIVHATNSQKP. The chain crosses the membrane as a helical span at residues 156–175; that stretch reads VVYVGVWLPAVLLTIPDLIF. Topologically, residues 176–196 are extracellular; sequence ADIKEVDERYICDRFYPSDLW. The segment at 187–191 is chemokine binding, important for signaling; sequence CDRFY. Positions 192–211 are involved in dimerization; that stretch reads PSDLWLVVFQFQHIVVGLLL. A helical membrane pass occupies residues 197–217; it reads LVVFQFQHIVVGLLLPGIVIL. The Cytoplasmic portion of the chain corresponds to 218–242; sequence SCYCIIISKLSHSKGYQKRKALKTT. A helical transmembrane segment spans residues 243-262; the sequence is VILILTFFACWLPYYIGISI. The Extracellular portion of the chain corresponds to 263 to 283; it reads DSFILLEIIQQGCEFESTVHK. The segment at 267 to 269 is involved in dimerization; sequence LLE. A helical membrane pass occupies residues 284-303; that stretch reads WISITEALAFFHCCLNPILY. Topologically, residues 304 to 353 are cytoplasmic; it reads AFLGAKFKTSAQHALTSVSRGSSLKILSKGKRGGHSSVSTESESSSFHSS. Phosphoserine occurs at positions 320 and 322. 2 positions are modified to phosphoserine; by PKC and GRK6: Ser-325 and Ser-326. A disordered region spans residues 330-353; that stretch reads LSKGKRGGHSSVSTESESSSFHSS. Ser-331 is modified (phosphoserine; by GRK6). A Glycyl lysine isopeptide (Lys-Gly) (interchain with G-Cter in ubiquitin) cross-link involves residue Lys-332. Over residues 338–353 the composition is skewed to low complexity; that stretch reads HSSVSTESESSSFHSS. Ser-340 is modified (phosphoserine; by GRK6). Phosphoserine is present on residues Ser-349 and Ser-352.

It belongs to the G-protein coupled receptor 1 family. In terms of assembly, monomer. Can form homodimers. Interacts with CD164. Interacts with ARRB2; the interaction is dependent on the C-terminal phosphorylation of CXCR4 and allows activation of MAPK1 and MAPK3. Interacts with ARR3; the interaction is dependent on the C-terminal phosphorylation of CXCR4 and modulates calcium mobilization. Interacts with RNF113A; the interaction, enhanced by CXCL12, promotes CXCR4 ubiquitination and subsequent degradation. Interacts (via the cytoplasmic C-terminal) with ITCH (via the WW domains I and II); the interaction, enhanced by CXCL12, promotes CXCR4 ubiquitination and leads to its degradation. Interacts with extracellular ubiquitin. Interacts with DBN1; this interaction is enhanced by antigenic stimulation. Following LPS binding, may form a complex with GDF5, HSP90AA1 and HSPA8. In terms of processing, phosphorylated on agonist stimulation. Rapidly phosphorylated on serine and threonine residues in the C-terminal. Phosphorylation at Ser-325 and Ser-326 leads to recruitment of ITCH, ubiquitination and protein degradation. Post-translationally, ubiquitinated after ligand binding, leading to its degradation. Ubiquitinated by ITCH at the cell membrane on agonist stimulation. The ubiquitin-dependent mechanism, endosomal sorting complex required for transport (ESCRT), then targets CXCR4 for lysosomal degradation. This process is dependent also on prior Ser-/Thr-phosphorylation in the C-terminal of CXCR4. Also binding of ARRB1 to STAM negatively regulates CXCR4 sorting to lysosomes though modulating ubiquitination of SFR5S. Sulfation is required for efficient binding of CXCL12/SDF-1alpha and promotes its dimerization. In terms of processing, O- and N-glycosylated. N-glycosylation can mask coreceptor function. The O-glycosylation chondroitin sulfate attachment does not affect interaction with CXCL12/SDF-1alpha nor its coreceptor activity. In terms of tissue distribution, brain, heart, kidney, lung and liver.

It is found in the cell membrane. The protein localises to the cell junction. It localises to the early endosome. The protein resides in the late endosome. Its subcellular location is the lysosome. Functionally, receptor for the C-X-C chemokine CXCL12/SDF-1 that transduces a signal by increasing intracellular calcium ion levels and enhancing MAPK1/MAPK3 activation. Involved in the AKT signaling cascade. Plays a role in regulation of cell migration, e.g. during wound healing. Acts as a receptor for extracellular ubiquitin; leading to enhanced intracellular calcium ions and reduced cellular cAMP levels. Binds bacterial lipopolysaccharide (LPS) et mediates LPS-induced inflammatory response, including TNF secretion by monocytes. Involved in hematopoiesis and in cardiac ventricular septum formation. Also plays an essential role in vascularization of the gastrointestinal tract, probably by regulating vascular branching and/or remodeling processes in endothelial cells. Involved in cerebellar development. In the CNS, could mediate hippocampal-neuron survival. The polypeptide is C-X-C chemokine receptor type 4 (CXCR4) (Bos taurus (Bovine)).